Consider the following 498-residue polypeptide: ATP synthase subunit beta, chloroplastic (498 aa).

Residue Gly-172–Thr-179 participates in ATP binding.

This sequence belongs to the ATPase alpha/beta chains family. In terms of assembly, F-type ATPases have 2 components, CF(1) - the catalytic core - and CF(0) - the membrane proton channel. CF(1) has five subunits: alpha(3), beta(3), gamma(1), delta(1), epsilon(1). CF(0) has four main subunits: a(1), b(1), b'(1) and c(9-12).

The protein resides in the plastid. The protein localises to the chloroplast thylakoid membrane. It carries out the reaction ATP + H2O + 4 H(+)(in) = ADP + phosphate + 5 H(+)(out). In terms of biological role, produces ATP from ADP in the presence of a proton gradient across the membrane. The catalytic sites are hosted primarily by the beta subunits. This is ATP synthase subunit beta, chloroplastic from Hyophorbe lagenicaulis (Bottle palm).